A 201-amino-acid polypeptide reads, in one-letter code: Small ribosomal subunit protein uS4 (201 aa).

The tract at residues 19–41 is disordered; it reads LVGGSSAYEKRPYPPGQHGRARI. The S4 RNA-binding domain maps to 91 to 157; it reads SRLDNVVYRA…LPFEVARETA (67 aa).

Belongs to the universal ribosomal protein uS4 family. As to quaternary structure, part of the 30S ribosomal subunit. Contacts protein S5. The interaction surface between S4 and S5 is involved in control of translational fidelity.

Functionally, one of the primary rRNA binding proteins, it binds directly to 16S rRNA where it nucleates assembly of the body of the 30S subunit. With S5 and S12 plays an important role in translational accuracy. The chain is Small ribosomal subunit protein uS4 from Mycobacteroides abscessus (strain ATCC 19977 / DSM 44196 / CCUG 20993 / CIP 104536 / JCM 13569 / NCTC 13031 / TMC 1543 / L948) (Mycobacterium abscessus).